Here is a 949-residue protein sequence, read N- to C-terminus: Glycine dehydrogenase (decarboxylating) (949 aa).

An N6-(pyridoxal phosphate)lysine modification is found at Lys704.

The protein belongs to the GcvP family. The glycine cleavage system is composed of four proteins: P, T, L and H. The cofactor is pyridoxal 5'-phosphate.

The enzyme catalyses N(6)-[(R)-lipoyl]-L-lysyl-[glycine-cleavage complex H protein] + glycine + H(+) = N(6)-[(R)-S(8)-aminomethyldihydrolipoyl]-L-lysyl-[glycine-cleavage complex H protein] + CO2. In terms of biological role, the glycine cleavage system catalyzes the degradation of glycine. The P protein binds the alpha-amino group of glycine through its pyridoxal phosphate cofactor; CO(2) is released and the remaining methylamine moiety is then transferred to the lipoamide cofactor of the H protein. The polypeptide is Glycine dehydrogenase (decarboxylating) (Bacteroides fragilis (strain ATCC 25285 / DSM 2151 / CCUG 4856 / JCM 11019 / LMG 10263 / NCTC 9343 / Onslow / VPI 2553 / EN-2)).